The sequence spans 173 residues: T-cell receptor beta-1 chain C region (173 aa).

The interval 1 to 146 (EDLRNVTPPK…GVLSATILYE (146 aa)) is c region. A disulfide bridge connects residues Cys31 and Cys71. N-linked (GlcNAc...) asparagine glycosylation is found at Asn67 and Asn116. The chain crosses the membrane as a helical span at residues 146–167 (EILLGKATLYAVLVSTLVVMAM). Topologically, residues 168-173 (VKRKNS) are cytoplasmic.

It is found in the membrane. This chain is T-cell receptor beta-1 chain C region, found in Mus musculus (Mouse).